The following is a 468-amino-acid chain: Microtubule-associated tyrosine carboxypeptidase 1 (468 aa).

The span at 1-10 (MVLDSGTQVY) shows a compositional bias: polar residues. Disordered regions lie at residues 1-39 (MVLD…PPLY) and 77-112 (MKRS…TLRP). His277 provides a ligand contact to Zn(2+). The active-site Nucleophile is the Glu278. His282 and Glu313 together coordinate Zn(2+).

Belongs to the peptidase MATCAP family. Zn(2+) serves as cofactor.

It is found in the cytoplasm. Its subcellular location is the cytoskeleton. The catalysed reaction is C-terminal L-alpha-aminoacyl-L-glutamyl-L-glutamyl-L-tyrosyl-[tubulin] + H2O = C-terminal L-alpha-aminoacyl-L-glutamyl-L-glutamyl-[tubulin] + L-tyrosine. The enzyme catalyses C-terminal L-alpha-aminoacyl-L-glutamyl-L-glutamyl-L-phenylalanyl-[tubulin] + H2O = C-terminal L-alpha-aminoacyl-L-glutamyl-L-glutamyl-[tubulin] + L-phenylalanine. Functionally, tyrosine carboxypeptidase that removes the C-terminal tyrosine residue of alpha-tubulin, thereby regulating microtubule dynamics and function. Also able to remove the C-terminal phenylalanine residue of alpha-tubulin TUBA8. Recognizes adjacent tubulin dimers along the same protofilament. The sequence is that of Microtubule-associated tyrosine carboxypeptidase 1 from Rattus norvegicus (Rat).